The chain runs to 61 residues: Sperm protamine P1 (61 aa).

The tract at residues 1–61 (MARYRHSRSR…RRYHSHRRRY (61 aa)) is disordered.

The protein belongs to the protamine P1 family. As to expression, testis.

Its subcellular location is the nucleus. It localises to the chromosome. In terms of biological role, protamines substitute for histones in the chromatin of sperm during the haploid phase of spermatogenesis. They compact sperm DNA into a highly condensed, stable and inactive complex. This Notoryctes typhlops (Southern marsupial mole) protein is Sperm protamine P1 (PRM1).